A 37-amino-acid chain; its full sequence is Omega-sparatoxin-Hv1a (37 aa).

3 disulfide bridges follow: C4–C18, C11–C23, and C17–C33.

As to expression, expressed by the venom gland.

The protein localises to the secreted. In terms of biological role, blocks calcium channels (Cav). The polypeptide is Omega-sparatoxin-Hv1a (Heteropoda venatoria (Brown huntsman spider)).